The following is a 338-amino-acid chain: 3-dehydroquinate synthase (338 aa).

It belongs to the archaeal-type DHQ synthase family.

The enzyme catalyses 2-amino-2,3,7-trideoxy-D-lyxo-hept-6-ulosonate + NAD(+) + H2O = 3-dehydroquinate + NH4(+) + NADH + H(+). Functionally, catalyzes the oxidative deamination and cyclization of 2-amino-3,7-dideoxy-D-threo-hept-6-ulosonic acid (ADH) to yield 3-dehydroquinate (DHQ), which is fed into the canonical shikimic pathway of aromatic amino acid biosynthesis. This Cenarchaeum symbiosum (strain A) protein is 3-dehydroquinate synthase.